The following is a 501-amino-acid chain: Archaemetzincin-1 (501 aa).

H261 provides a ligand contact to Zn(2+). The active-site Proton acceptor is E262. 5 residues coordinate Zn(2+): H265, C272, C277, C296, and C299. Residues 349-370 are disordered; it reads DSGMGCESDTEPVTSPSEPVTP.

It belongs to the peptidase M54 family. Zn(2+) serves as cofactor.

In terms of biological role, probable zinc metalloprotease. The sequence is that of Archaemetzincin-1 (Amz1) from Rattus norvegicus (Rat).